We begin with the raw amino-acid sequence, 501 residues long: Nuclear receptor-binding protein 2 (501 aa).

The tract at residues 1–33 is disordered; sequence MAAPEPAPRRAREREREREDESEDESDILEESP. The span at 7 to 19 shows a compositional bias: basic and acidic residues; it reads APRRARERERERE. Residues 20–30 are compositionally biased toward acidic residues; that stretch reads DESEDESDILE. The Protein kinase domain occupies 38–306; sequence QKRREQVNQG…AHSLLFHRVL (269 aa). 2 positions are modified to phosphothreonine: threonine 409 and threonine 411.

This sequence belongs to the protein kinase superfamily. Ser/Thr protein kinase family.

Its subcellular location is the cytoplasm. Functionally, may regulate apoptosis of neural progenitor cells during their differentiation. The sequence is that of Nuclear receptor-binding protein 2 from Homo sapiens (Human).